Consider the following 387-residue polypeptide: ATP phosphoribosyltransferase regulatory subunit (387 aa).

Belongs to the class-II aminoacyl-tRNA synthetase family. HisZ subfamily. As to quaternary structure, heteromultimer composed of HisG and HisZ subunits.

The protein localises to the cytoplasm. It participates in amino-acid biosynthesis; L-histidine biosynthesis; L-histidine from 5-phospho-alpha-D-ribose 1-diphosphate: step 1/9. Required for the first step of histidine biosynthesis. May allow the feedback regulation of ATP phosphoribosyltransferase activity by histidine. This is ATP phosphoribosyltransferase regulatory subunit from Polynucleobacter necessarius subsp. necessarius (strain STIR1).